The primary structure comprises 104 residues: Small ubiquitin-related modifier 3 (104 aa).

Glycyl lysine isopeptide (Lys-Gly) (interchain with G-Cter in SUMO2) cross-links involve residues Lys-5 and Lys-7. A Glycyl lysine isopeptide (Lys-Gly) (interchain with G-Cter in SUMO); alternate cross-link involves residue Lys-11. A Glycyl lysine isopeptide (Lys-Gly) (interchain with G-Cter in SUMO2); alternate cross-link involves residue Lys-11. The Ubiquitin-like domain maps to 15-92 (DHINLKVAGQ…IDVFQQQTGG (78 aa)). A Glycyl lysine isopeptide (Gly-Lys) (interchain with K-? in acceptor proteins) cross-link involves residue Gly-92. The propeptide occupies 93–104 (SRVASCLLGSGL).

It belongs to the ubiquitin family. SUMO subfamily. In terms of assembly, interacts with SAE2 and UBE2I. Covalently attached to a number of proteins. Interacts with USP25 (via ts SIM domain); the interaction sumoylates USP25 and inhibits its ubiquitin hydrolyzing activity. Interacts with BMAL1. Polymeric chains can be formed through Lys-11 cross-linking. In terms of processing, cleavage of precursor form by SENP1, SENP2 or SENP5 is necessary for function.

The protein localises to the cytoplasm. The protein resides in the nucleus. Its subcellular location is the PML body. In terms of biological role, ubiquitin-like protein which can be covalently attached to target lysines either as a monomer or as a lysine-linked polymer. Does not seem to be involved in protein degradation and may function as an antagonist of ubiquitin in the degradation process. Plays a role in a number of cellular processes such as nuclear transport, DNA replication and repair, mitosis and signal transduction. Covalent attachment to its substrates requires prior activation by the E1 complex SAE1-SAE2 and linkage to the E2 enzyme UBE2I, and can be promoted by an E3 ligase such as PIAS1-4, RANBP2 or CBX4. Plays a role in the regulation of sumoylation status of SETX. The polypeptide is Small ubiquitin-related modifier 3 (SUMO3) (Bos taurus (Bovine)).